The following is a 104-amino-acid chain: Pyrimidine/purine nucleoside phosphorylase (104 aa).

Belongs to the nucleoside phosphorylase PpnP family.

The catalysed reaction is a purine D-ribonucleoside + phosphate = a purine nucleobase + alpha-D-ribose 1-phosphate. The enzyme catalyses adenosine + phosphate = alpha-D-ribose 1-phosphate + adenine. It catalyses the reaction cytidine + phosphate = cytosine + alpha-D-ribose 1-phosphate. It carries out the reaction guanosine + phosphate = alpha-D-ribose 1-phosphate + guanine. The catalysed reaction is inosine + phosphate = alpha-D-ribose 1-phosphate + hypoxanthine. The enzyme catalyses thymidine + phosphate = 2-deoxy-alpha-D-ribose 1-phosphate + thymine. It catalyses the reaction uridine + phosphate = alpha-D-ribose 1-phosphate + uracil. It carries out the reaction xanthosine + phosphate = alpha-D-ribose 1-phosphate + xanthine. Its function is as follows. Catalyzes the phosphorolysis of diverse nucleosides, yielding D-ribose 1-phosphate and the respective free bases. Can use uridine, adenosine, guanosine, cytidine, thymidine, inosine and xanthosine as substrates. Also catalyzes the reverse reactions. This chain is Pyrimidine/purine nucleoside phosphorylase, found in Geobacter metallireducens (strain ATCC 53774 / DSM 7210 / GS-15).